Consider the following 804-residue polypeptide: Probable exo-1,4-beta-xylosidase xlnD (804 aa).

The N-terminal stretch at 1-17 is a signal peptide; the sequence is MAVAALALLALLPQALG. Residues Asn20, Asn115, Asn139, Asn234, and Asn243 are each glycosylated (N-linked (GlcNAc...) asparagine). Residue Asp307 is part of the active site. Asn349, Asn382, Asn404, Asn433, Asn444, Asn485, Asn489, Asn621, Asn652, Asn666, Asn688, and Asn710 each carry an N-linked (GlcNAc...) asparagine glycan.

Belongs to the glycosyl hydrolase 3 family.

The protein localises to the secreted. The catalysed reaction is Hydrolysis of (1-&gt;4)-beta-D-xylans, to remove successive D-xylose residues from the non-reducing termini.. It participates in glycan degradation; xylan degradation. Xylan 1,4-beta-xylosidase involved in the hydrolysis of xylan, a major structural heterogeneous polysaccharide found in plant biomass representing the second most abundant polysaccharide in the biosphere, after cellulose. This Aspergillus japonicus protein is Probable exo-1,4-beta-xylosidase xlnD (xlnD).